We begin with the raw amino-acid sequence, 374 residues long: Probable ethanolamine kinase (374 aa).

The ATP site is built by Arg93 and Asp252.

Belongs to the choline/ethanolamine kinase family.

It carries out the reaction ethanolamine + ATP = phosphoethanolamine + ADP + H(+). It participates in phospholipid metabolism; phosphatidylethanolamine biosynthesis; phosphatidylethanolamine from ethanolamine: step 1/3. Functionally, involved in phospholipid biosynthesis. Catalyzes the first step in phosphatidylethanolamine biosynthesis. This is Probable ethanolamine kinase (EMB1187) from Arabidopsis thaliana (Mouse-ear cress).